We begin with the raw amino-acid sequence, 354 residues long: Protein RecA (354 aa).

Position 65–72 (65–72 (GPESSGKT)) interacts with ATP.

Belongs to the RecA family.

It localises to the cytoplasm. Can catalyze the hydrolysis of ATP in the presence of single-stranded DNA, the ATP-dependent uptake of single-stranded DNA by duplex DNA, and the ATP-dependent hybridization of homologous single-stranded DNAs. It interacts with LexA causing its activation and leading to its autocatalytic cleavage. The protein is Protein RecA of Pseudomonas savastanoi pv. phaseolicola (strain 1448A / Race 6) (Pseudomonas syringae pv. phaseolicola (strain 1448A / Race 6)).